Here is a 385-residue protein sequence, read N- to C-terminus: Transmembrane protein 271 (385 aa).

A run of 2 helical transmembrane segments spans residues 9–29 and 50–70; these read CAAL…AVGL and GAFY…AALL. A disordered region spans residues 83–111; it reads EPGPGLGVPAAPAGAPEATPGESGAAAGA. Residues 121–141 form a helical membrane-spanning segment; that stretch reads LLLGVLVFMLGVLSAFAGAVI. Residues 160 to 203 form a disordered region; it reads PRAPGSSPGSAPGSTPGSAPGSAPGSAPGSAPGAPRARSTLDSA. Residues 163–197 are compositionally biased toward low complexity; sequence PGSSPGSAPGSTPGSAPGSAPGSAPGSAPGAPRAR. The helical transmembrane segment at 219–239 threads the bilayer; sequence VLSTVFNSLECLLGLLSLLLV. Positions 245 to 305 are disordered; sequence SQARRGRRGR…SEASILSPEE (61 aa). Residues 246–258 show a composition bias toward basic residues; that stretch reads QARRGRRGRRRGG. Low complexity predominate over residues 259–277; the sequence is RALARPRGGSGLRAQPPAS. The segment covering 278 to 292 has biased composition (basic residues); the sequence is RARRGRRGRRGRRLQ.

Its subcellular location is the membrane. The protein is Transmembrane protein 271 of Homo sapiens (Human).